We begin with the raw amino-acid sequence, 163 residues long: Protein LOL5 (163 aa).

Composition is skewed to polar residues over residues 1 to 25 and 33 to 44; these read MSQL…QPQS and LQPQHPPSSTAH. Residues 1 to 51 are disordered; it reads MSQLPLASQATTTDLVSTTAMQPQSEGIVDESLQPQHPPSSTAHDSPCLQD. Putative zinc finger stretches follow at residues 70 to 100 and 108 to 138; these read QMVC…MNYV and KVHC…VTEI.

Its subcellular location is the nucleus. Involved in plant growth and disease resistance. The polypeptide is Protein LOL5 (LOL5) (Oryza sativa subsp. japonica (Rice)).